The following is a 519-amino-acid chain: Exodeoxyribonuclease 7 large subunit (519 aa).

Residues 500-519 (VGRGKTRKPKEEPPAQGSLL) are disordered.

It belongs to the XseA family. Heterooligomer composed of large and small subunits.

The protein localises to the cytoplasm. The enzyme catalyses Exonucleolytic cleavage in either 5'- to 3'- or 3'- to 5'-direction to yield nucleoside 5'-phosphates.. In terms of biological role, bidirectionally degrades single-stranded DNA into large acid-insoluble oligonucleotides, which are then degraded further into small acid-soluble oligonucleotides. The chain is Exodeoxyribonuclease 7 large subunit from Cereibacter sphaeroides (strain ATCC 17029 / ATH 2.4.9) (Rhodobacter sphaeroides).